Consider the following 157-residue polypeptide: MFDILIYLFENYIHNESRISIDYDSLTNDLSDIGFQRRDIYNALSWLKNLSCYKKNIIPSINPLSNKITIRIYTQEESLKLNVDCRGFILFLEQLEILTLDTREVIIERIMELDINELNLEDLKWIVLIVLFNIPGCESAYHKLENLLFNFKEDIIH.

It belongs to the Smg family.

The chain is Protein Smg from Buchnera aphidicola subsp. Acyrthosiphon pisum (strain Tuc7).